Here is a 306-residue protein sequence, read N- to C-terminus: Acetyl-coenzyme A carboxylase carboxyl transferase subunit beta (306 aa).

The region spanning 27–296 (LWHKCPSCEA…PRFVAPVIEP (270 aa)) is the CoA carboxyltransferase N-terminal domain. Positions 31, 34, 50, and 53 each coordinate Zn(2+). A C4-type zinc finger spans residues 31-53 (CPSCEAVLYRPELEKTLDVCPKC).

This sequence belongs to the AccD/PCCB family. In terms of assembly, acetyl-CoA carboxylase is a heterohexamer composed of biotin carboxyl carrier protein (AccB), biotin carboxylase (AccC) and two subunits each of ACCase subunit alpha (AccA) and ACCase subunit beta (AccD). Zn(2+) serves as cofactor.

It is found in the cytoplasm. The enzyme catalyses N(6)-carboxybiotinyl-L-lysyl-[protein] + acetyl-CoA = N(6)-biotinyl-L-lysyl-[protein] + malonyl-CoA. Its pathway is lipid metabolism; malonyl-CoA biosynthesis; malonyl-CoA from acetyl-CoA: step 1/1. In terms of biological role, component of the acetyl coenzyme A carboxylase (ACC) complex. Biotin carboxylase (BC) catalyzes the carboxylation of biotin on its carrier protein (BCCP) and then the CO(2) group is transferred by the transcarboxylase to acetyl-CoA to form malonyl-CoA. This is Acetyl-coenzyme A carboxylase carboxyl transferase subunit beta from Pseudomonas savastanoi pv. phaseolicola (strain 1448A / Race 6) (Pseudomonas syringae pv. phaseolicola (strain 1448A / Race 6)).